The following is a 445-amino-acid chain: Phosphoglucosamine mutase (445 aa).

The Phosphoserine intermediate role is filled by Ser-102. Residues Ser-102, Asp-240, Asp-242, and Asp-244 each coordinate Mg(2+). Residue Ser-102 is modified to Phosphoserine.

This sequence belongs to the phosphohexose mutase family. Requires Mg(2+) as cofactor. Activated by phosphorylation.

It carries out the reaction alpha-D-glucosamine 1-phosphate = D-glucosamine 6-phosphate. Its function is as follows. Catalyzes the conversion of glucosamine-6-phosphate to glucosamine-1-phosphate. This is Phosphoglucosamine mutase from Mycolicibacterium gilvum (strain PYR-GCK) (Mycobacterium gilvum (strain PYR-GCK)).